Here is an 803-residue protein sequence, read N- to C-terminus: H(+)/Cl(-) exchange transporter 7 (803 aa).

The interval 1–46 (MANVSKKVSWSGRDRDDEEGAPLLRRTGQPDEETPLLNGAGPGARQ) is disordered. Residues 1–124 (MANVSKKVSW…TAFRTVEIKR (124 aa)) lie on the Cytoplasmic side of the membrane. Phosphoserine is present on serine 9. Helical transmembrane passes span 125–157 (WVICALIGILTGLVACFIDIVVENLAGLKYRVI) and 172–195 (FSLLLWATLNSAFVLVGSVIVAFI). Positions 201–205 (GSGIP) match the Selectivity filter part_1 motif. A chloride-binding site is contributed by serine 202. The helical intramembrane region spans 204 to 211 (IPQIKCFL). The next 2 membrane-spanning stretches (helical) occupy residues 221–239 (RLKTLVIKVSGVILSVVGG) and 245–262 (EGPMIHSGSVIAAGISQG). The Selectivity filter part_2 signature appears at 243–247 (GKEGP). 2 consecutive intramembrane regions (helical) follow at residues 286–298 (FVSAGAAAGVSAA) and 302–310 (PVGGVLFSL). 5 consecutive transmembrane segments (helical) span residues 320 to 339 (FLTWRIFFASMISTFTLNFV), 373 to 403 (IPVFIAMGVVGGILGAVFNALNYWLTMFRIR), 408 to 430 (PCLQVIEAMLVAAVTATVAFVLI), 485 to 505 (PMTLGLFTLVYFFLACWTYGL), and 510 to 533 (GVFIPSLLIGAAWGRLFGISLSYL). Residues 510–514 (GVFIP) carry the Selectivity filter part_3 motif. Phenylalanine 512 is a binding site for chloride. Residues 543 to 557 (GKYALMGAAAQLGGI) constitute an intramembrane region (helical). The segment at residues 558 to 560 (VRM) is an intramembrane region (note=Loop between two helices). The segment at residues 561 to 572 (TLSLTVIMMEAT) is an intramembrane region (helical). The note=Loop between two helices intramembrane region spans 573-576 (SNVT). Residues 577-595 (YGFPIMLVLMTAKIVGDVF) form a helical membrane-spanning segment. Residues 596 to 803 (IEGLYDMHIQ…GLEELSLAQT (208 aa)) are Cytoplasmic-facing. Chloride is bound at residue tyrosine 600. 2 CBS domains span residues 629–693 (MSTP…VFVE) and 739–797 (MNPS…GLEE). ATP-binding positions include 656–658 (HNG) and 781–784 (TRKD). Serine 799 carries the post-translational modification Phosphoserine.

Belongs to the chloride channel (TC 2.A.49) family. ClC-7/CLCN7 subfamily. In terms of assembly, chloride channel 7 are heteromers of alpha (CLCN7) and beta (OSTM1) subunits. Liver, spleen, kidneys and brain.

The protein localises to the lysosome membrane. It catalyses the reaction 2 chloride(in) + H(+)(out) = 2 chloride(out) + H(+)(in). Functionally, slowly voltage-gated channel mediating the exchange of chloride ions against protons. Functions as antiporter and contributes to the acidification of the lysosome lumen and may be involved in maintaining lysosomal pH. The CLC channel family contains both chloride channels and proton-coupled anion transporters that exchange chloride or another anion for protons. The presence of conserved gating glutamate residues is typical for family members that function as antiporters. This is H(+)/Cl(-) exchange transporter 7 from Mus musculus (Mouse).